The sequence spans 1125 residues: Transient receptor potential cation channel subfamily A member 1 (1125 aa).

Over Met1–His721 the chain is Cytoplasmic. ANK repeat units follow at residues Glu63–Val94, Tyr98–Leu127, Asn131–Leu161, Asn165–Lys194, Trp198–Tyr227, Lys239–Met268, Ala272–Asp301, Asn309–Ser338, and Glu342–Ile371. 5 cysteine pairs are disulfide-bonded: Cys193–Cys666, Cys463–Cys666, Cys609–Cys622, Cys622–Cys666, and Cys634–Cys859. Pro395 is modified (4-hydroxyproline; transient). ANK repeat units follow at residues Asp413–Ser442, Asp446–Leu475, His482–Ser511, Asn514–Asp543, and Glu548–Leu577. The (E)-cinnamaldehyde site is built by Cys415 and Cys422. (E)-cinnamaldehyde is bound at residue Cys622. Cys634 carries the post-translational modification Cysteine sulfenic acid (-SOH); transient; in hyperoxia. (E)-cinnamaldehyde contacts are provided by Cys642, Cys666, and Lys712. The chain crosses the membrane as a helical span at residues Met722–Ile742. Residues Gln743–Thr767 are Extracellular-facing. Residues Asn749 and Asn755 are each glycosylated (N-linked (GlcNAc...) asparagine). The chain crosses the membrane as a helical span at residues Leu768 to Tyr788. Topologically, residues Cys789–Tyr806 are cytoplasmic. Residues Glu791, Gln794, Asn808, and Glu811 each contribute to the Ca(2+) site. A helical membrane pass occupies residues Asn807–Leu827. Over Asp828–Tyr832 the chain is Extracellular. Residues Met833–Leu853 form a helical membrane-spanning segment. At Gln854–Ser876 the chain is on the cytoplasmic side. A Cysteine sulfenic acid (-SOH); transient; in hyperoxia modification is found at Cys859. Residues Thr877–Phe897 traverse the membrane as a helical segment. The Extracellular segment spans residues Gln898–Pro904. An intramembrane region (pore-forming) is located at residues Leu905–Phe925. Topologically, residues Leu926–Pro937 are extracellular. Residues Val938 to Leu959 traverse the membrane as a helical segment. Residues Ile960–Ile1125 lie on the Cytoplasmic side of the membrane. The stretch at Met1044–Lys1073 forms a coiled coil. Position 1048–1054 (Lys1048–Lys1054) interacts with a 1,2-diacyl-sn-glycero-3-phospho-(1D-myo-inositol).

Belongs to the transient receptor (TC 1.A.4) family. In terms of assembly, homotetramer. Interacts with TMEM100. Interacts with EGLN1. Interacts with the scorpion wasabi receptor toxin at the same site that electrophiles but in a non-covalent manner. TRPA1 activation by electrophiles occurs though covalent modification of specific cysteine residues in the N-terminal cytoplasmic domain. In terms of processing, hydroxylation is required for TRPA1 activity inhibition in normoxia. In hypoxia, the decrease in oxygen concentration diminishes the activity of the hydroxylase EGLN1, thus relieving TRPA1 from inhibition and ultimately leading to channel activation. Post-translationally, oxidation of Cys-634 and Cys-859 in hyperoxia may override the hydroxylase EGLN1-mediated inhibition, causing TRPA1 activation. Specifically expressed in a subset of nociceptive neurons. Expressed in dorsal root ganglia.

Its subcellular location is the cell membrane. It catalyses the reaction Ca(2+)(in) = Ca(2+)(out). The catalysed reaction is Mg(2+)(in) = Mg(2+)(out). The enzyme catalyses Na(+)(in) = Na(+)(out). It carries out the reaction K(+)(in) = K(+)(out). It catalyses the reaction Zn(2+)(in) = Zn(2+)(out). Electrophilic ligands activate the channel by covalent modification of intracellular cysteines; Cys-622 plays a key role in covalent binding of electrophiles. Extracellular Ca(2+) both potentiates and inactivates TRPA1; a rapid potentiation follows by slow desensitization. Activated by increase in intracellular Ca(2+) concentration. Inhibited by ruthenium red, a potent blocker of TRPV channels and selectively by A-967079. Activated by benzyl isothiocyanate (BITC), iodoacetamide, sulfhydryl reactive agent MTSEA, N-methyl maleimide (NMM), N-ethylmaleimide (NEM), and 2-aminoethyldiphenylborinate (2-APB). Also activated by hyperoxia. Acivated by intracellular Zn(2+). TRPA1 activation may critically depend on the presence of small intracellular compounds such as polyphosphates. Ligand-activated Ca(2+)-permeable, nonselective cation channel. Involved in pain detection and possibly also in cold perception, oxygen concentration perception, cough, itch, and inner ear function. Has a relatively high Ca(2+) selectivity, with a preference for divalent over monovalent cations (Ca(2+) &gt; Ba(2+) &gt; Mg(2+) &gt; NH4(+) &gt; Li(+) &gt; K(+)), the influx of cation into the cytoplasm, leads to membrane depolarization. Has a central role in the pain response to endogenous inflammatory mediators, such as bradykinin and to a diverse array of irritants. Activated by a large variety of structurally unrelated electrophilic and non-electrophilic chemical compounds, such as allylthiocyanate (AITC) from mustard oil or wasabi, cinnamaldehyde, diallyl disulfide (DADS) from garlic, and acrolein, an environmental irritant. Electrophilic ligands activate TRPA1 by interacting with critical N-terminal Cys residues in a covalent manner. Non-electrophile agonists bind at distinct sites in the transmembrane domain to promote channel activation. Also acts as an ionotropic cannabinoid receptor by being activated by delta(9)-tetrahydrocannabinol (THC), the psychoactive component of marijuana. May be a component for the mechanosensitive transduction channel of hair cells in inner ear, thereby participating in the perception of sounds. This chain is Transient receptor potential cation channel subfamily A member 1, found in Rattus norvegicus (Rat).